The following is a 33-amino-acid chain: Protamine TP16 (33 aa).

Residues Met1–Arg33 form a disordered region.

As to expression, testis.

It is found in the nucleus. The protein resides in the chromosome. Protamines substitute for histones in the chromatin of sperm during the haploid phase of spermatogenesis. They compact sperm DNA into a highly condensed, stable and inactive complex. The chain is Protamine TP16 from Oncorhynchus mykiss (Rainbow trout).